Consider the following 162-residue polypeptide: HTH-type transcriptional regulator IscR (162 aa).

The 130-residue stretch at 2 to 131 folds into the HTH rrf2-type domain; it reads RLTSKGRYAV…NNITLGELVN (130 aa). The H-T-H motif DNA-binding region spans 28 to 51; it reads LADISERQGISLSYLEQLFSRLRK. Residues Cys-92, Cys-98, and Cys-104 each contribute to the [2Fe-2S] cluster site. A disordered region spans residues 141–162; it reads RQHNEAHRPTRAQDAIDVKLRA.

It depends on [2Fe-2S] cluster as a cofactor.

In terms of biological role, regulates the transcription of several operons and genes involved in the biogenesis of Fe-S clusters and Fe-S-containing proteins. The protein is HTH-type transcriptional regulator IscR of Cronobacter sakazakii (strain ATCC BAA-894) (Enterobacter sakazakii).